The primary structure comprises 423 residues: GTPase ERA-like, chloroplastic (423 aa).

A chloroplast-targeting transit peptide spans 1–60 (MELGLALRLVAPPPRLPCRALQPPPMPCFSPCAARRSRIRSSRLERRVGVVVSGGSMASL). The 171-residue stretch at 124-294 (RSGYVAVLGK…KEWILSKLPL (171 aa)) folds into the Era-type G domain. Residues 132-139 (GKPNVGKS) form a G1 region. 132–139 (GKPNVGKS) is a GTP binding site. Residues 158 to 162 (QTTRH) are G2. Positions 179-182 (DTPG) are G3. GTP is bound by residues 179 to 183 (DTPGV) and 244 to 247 (NKKD). Residues 244–247 (NKKD) form a G4 region. A G5 region spans residues 273–275 (ISA). The region spanning 325–402 (YRQEIPYACQ…YLEIMVKVKE (78 aa)) is the KH type-2 domain.

It belongs to the TRAFAC class TrmE-Era-EngA-EngB-Septin-like GTPase superfamily. Era GTPase family.

It localises to the plastid. The protein localises to the chloroplast stroma. It is found in the chloroplast nucleoid. Nuclear genome-encoded probable GTPase involved in ribosome biogenesis in chloroplasts. Plays a role in 16S rRNA maturation in plastids and may contribute to the assembly of the small (30S) ribosomal subunit. The chain is GTPase ERA-like, chloroplastic from Oryza sativa subsp. japonica (Rice).